Here is a 364-residue protein sequence, read N- to C-terminus: Long-wave-sensitive opsin 1 (364 aa).

Topologically, residues 1-52 (MAQRWGPQKLAGGQPQAGFEDSTQASIFTYTNNNATRDPFEGPNYHIAPRWV) are extracellular. O-linked (GlcNAc) serine glycosylation is present at Ser22. Residue Asn34 is glycosylated (N-linked (GlcNAc...) asparagine). A helical membrane pass occupies residues 53 to 77 (YHVTSAWMIFVVIASVFTNGLVLAA). Over 78 to 89 (TMRFKKLRHPLN) the chain is Cytoplasmic. A helical transmembrane segment spans residues 90-115 (WILVNLAVADLAETIIASTISVVNQI). At 116-129 (YGYFVLGHPMCVVE) the chain is on the extracellular side. Cys126 and Cys203 form a disulfide bridge. The chain crosses the membrane as a helical span at residues 130 to 149 (GYTVSLCGITGLWSLAIISW). Residues 150-168 (ERWMVVCKPFGNVRFDAKL) lie on the Cytoplasmic side of the membrane. The helical transmembrane segment at 169-192 (AVAGIAFSWIWAAVWTAPPIFGWS) threads the bilayer. The Extracellular segment spans residues 193–218 (RYWPHGLKTSCGPDVFSGSSYPGVQS). A helical transmembrane segment spans residues 219 to 246 (YMIVLMITCCIIPLSVIVLCYLQVWLAI). Over 247 to 268 (RAVAKQQKESESTQKAEKEVTR) the chain is Cytoplasmic. The chain crosses the membrane as a helical span at residues 269-292 (MVMVMVFAFCLCWGPYTFFACFAA). The Extracellular portion of the chain corresponds to 293-300 (AHPGYAFH). Residues 301-325 (PLVAALPAYFAKSATIYNPIIYVFM) traverse the membrane as a helical segment. The residue at position 312 (Lys312) is an N6-(retinylidene)lysine. Over 326–364 (NRQFRNCILQLFGKKVDDSSELSSVSKTEASSVSSVSPA) the chain is Cytoplasmic.

Belongs to the G-protein coupled receptor 1 family. Opsin subfamily. Phosphorylated on some or all of the serine and threonine residues present in the C-terminal region. As to expression, the three color pigments are found in the cone photoreceptor cells. Expressed in retina.

The protein localises to the membrane. Its function is as follows. Visual pigments are the light-absorbing molecules that mediate vision. They consist of an apoprotein, opsin, covalently linked to cis-retinal. In Equus caballus (Horse), this protein is Long-wave-sensitive opsin 1 (OPN1LW).